The sequence spans 121 residues: Large ribosomal subunit protein bL12 (121 aa).

This sequence belongs to the bacterial ribosomal protein bL12 family. In terms of assembly, homodimer. Part of the ribosomal stalk of the 50S ribosomal subunit. Forms a multimeric L10(L12)X complex, where L10 forms an elongated spine to which 2 to 4 L12 dimers bind in a sequential fashion. Binds GTP-bound translation factors.

In terms of biological role, forms part of the ribosomal stalk which helps the ribosome interact with GTP-bound translation factors. Is thus essential for accurate translation. This Pediococcus pentosaceus (strain ATCC 25745 / CCUG 21536 / LMG 10740 / 183-1w) protein is Large ribosomal subunit protein bL12.